We begin with the raw amino-acid sequence, 176 residues long: Large ribosomal subunit protein eL6 (176 aa).

The segment at 1–27 (MSQVAPKWYQSEDVPAPKQTRKTARPQ) is disordered.

The protein belongs to the eukaryotic ribosomal protein eL6 family. Component of the large ribosomal subunit. Mature ribosomes consist of a small (40S) and a large (60S) subunit. The 40S subunit contains about 32 different proteins and 1 molecule of RNA (18S). The 60S subunit contains 45 different proteins and 3 molecules of RNA (25S, 5.8S and 5S).

The protein localises to the cytoplasm. Component of the ribosome, a large ribonucleoprotein complex responsible for the synthesis of proteins in the cell. The small ribosomal subunit (SSU) binds messenger RNAs (mRNAs) and translates the encoded message by selecting cognate aminoacyl-transfer RNA (tRNA) molecules. The large subunit (LSU) contains the ribosomal catalytic site termed the peptidyl transferase center (PTC), which catalyzes the formation of peptide bonds, thereby polymerizing the amino acids delivered by tRNAs into a polypeptide chain. The nascent polypeptides leave the ribosome through a tunnel in the LSU and interact with protein factors that function in enzymatic processing, targeting, and the membrane insertion of nascent chains at the exit of the ribosomal tunnel. This is Large ribosomal subunit protein eL6 from Candida albicans (strain SC5314 / ATCC MYA-2876) (Yeast).